A 140-amino-acid chain; its full sequence is Protein E6 (140 aa).

Zinc fingers lie at residues 26 to 62 (CNFC…CQGC) and 99 to 135 (CVTC…CSLC).

The protein belongs to the papillomaviridae E6 protein family. As to quaternary structure, forms homodimers. Interacts with ubiquitin-protein ligase UBE3A/E6-AP; this interaction stimulates UBE3A ubiquitin activity. Interacts with host BAK1.

The protein resides in the host cytoplasm. It localises to the host nucleus. Functionally, plays a major role in the induction and maintenance of cellular transformation. E6 associates with host UBE3A/E6-AP ubiquitin-protein ligase and modulates its activity. Protects host keratinocytes from apoptosis by mediating the degradation of host BAK1. May also inhibit host immune response. The protein is Protein E6 of Human papillomavirus type 1 (Human papillomavirus type 1a).